A 285-amino-acid chain; its full sequence is MSIVLRLLSVLKHQQNKMQLDLSVNSYKLLDYSMEWSSDSVVLPPTSSDKTVMMPAKATSSRKRHRKPKLQYAKRRFSPVNPNDLVLVQQEPTHCVRLVFPLSKRWIHFDGLVYSLARLNVSMTVDYHVTLALIYAPEAGECFGNFLHLCPLLKDCLLEFKKLCVLGKTLTILASEWPFFTDVKKNKDNLTVPKAVEWLKEHGYEIYNSQLPLHMSLAKLHDLPQAQFAEAAGLCHYFDPREFALPCALEVVKIGGGKVNGRSIPLARFPINNEFKFIPYLYQCV.

Its subcellular location is the host nucleus. The protein localises to the host nucleolus. The protein resides in the host cytoplasm. Its function is as follows. Plays a role in the inhibition of host innate immunity by inhibiting the interaction between host IKBKE and MAVS. In turn, this inhibition prevents the production of host interferon beta. Additionally, may also interfere with host antiviral response within the nucleus. In Tylonycteris pachypus (Lesser bamboo bat), this protein is Non-structural protein ORF4b (ORF4b).